The sequence spans 232 residues: Phosphatidylserine decarboxylase proenzyme (232 aa).

Residue S190 is the Schiff-base intermediate with substrate; via pyruvic acid of the active site. S190 bears the Pyruvic acid (Ser); by autocatalysis mark.

Belongs to the phosphatidylserine decarboxylase family. PSD-A subfamily. Heterodimer of a large membrane-associated beta subunit and a small pyruvoyl-containing alpha subunit. Pyruvate is required as a cofactor. Is synthesized initially as an inactive proenzyme. Formation of the active enzyme involves a self-maturation process in which the active site pyruvoyl group is generated from an internal serine residue via an autocatalytic post-translational modification. Two non-identical subunits are generated from the proenzyme in this reaction, and the pyruvate is formed at the N-terminus of the alpha chain, which is derived from the carboxyl end of the proenzyme. The post-translation cleavage follows an unusual pathway, termed non-hydrolytic serinolysis, in which the side chain hydroxyl group of the serine supplies its oxygen atom to form the C-terminus of the beta chain, while the remainder of the serine residue undergoes an oxidative deamination to produce ammonia and the pyruvoyl prosthetic group on the alpha chain.

The protein localises to the cell membrane. It catalyses the reaction a 1,2-diacyl-sn-glycero-3-phospho-L-serine + H(+) = a 1,2-diacyl-sn-glycero-3-phosphoethanolamine + CO2. It functions in the pathway phospholipid metabolism; phosphatidylethanolamine biosynthesis; phosphatidylethanolamine from CDP-diacylglycerol: step 2/2. Its function is as follows. Catalyzes the formation of phosphatidylethanolamine (PtdEtn) from phosphatidylserine (PtdSer). This is Phosphatidylserine decarboxylase proenzyme from Afipia carboxidovorans (strain ATCC 49405 / DSM 1227 / KCTC 32145 / OM5) (Oligotropha carboxidovorans).